The primary structure comprises 469 residues: RuvB-like helicase 2 (469 aa).

Position 76 to 83 (76 to 83) interacts with ATP; that stretch reads GPPSTGKT.

It belongs to the RuvB family. As to quaternary structure, may form heterododecamers with RVB1. Component of the SWR1 chromatin remodeling complex, the INO80 chromatin remodeling complex, and of the R2TP complex.

It localises to the nucleus. It catalyses the reaction ATP + H2O = ADP + phosphate + H(+). DNA helicase which participates in several chromatin remodeling complexes, including the SWR1 and the INO80 complexes. The SWR1 complex mediates the ATP-dependent exchange of histone H2A for the H2A variant HZT1 leading to transcriptional regulation of selected genes by chromatin remodeling. The INO80 complex remodels chromatin by shifting nucleosomes and is involved in DNA repair. Also involved in pre-rRNA processing. This chain is RuvB-like helicase 2 (rvb2), found in Aspergillus fumigatus (strain ATCC MYA-4609 / CBS 101355 / FGSC A1100 / Af293) (Neosartorya fumigata).